The following is a 344-amino-acid chain: Holliday junction branch migration complex subunit RuvB (344 aa).

Positions 1–182 (MSDRLISATA…FGIISRLEFY (182 aa)) are large ATPase domain (RuvB-L). Residues Leu-21, Arg-22, Gly-63, Lys-66, Thr-67, Thr-68, 129 to 131 (EDF), Arg-172, Tyr-182, and Arg-219 contribute to the ATP site. Residue Thr-67 coordinates Mg(2+). Positions 183-253 (NNEDLTRIVT…VAAEALEFFE (71 aa)) are small ATPAse domain (RuvB-S). The segment at 256-344 (PLGLDHTDRR…QKGLEQNSLF (89 aa)) is head domain (RuvB-H). DNA is bound by residues Arg-311 and Arg-316.

The protein belongs to the RuvB family. In terms of assembly, homohexamer. Forms an RuvA(8)-RuvB(12)-Holliday junction (HJ) complex. HJ DNA is sandwiched between 2 RuvA tetramers; dsDNA enters through RuvA and exits via RuvB. An RuvB hexamer assembles on each DNA strand where it exits the tetramer. Each RuvB hexamer is contacted by two RuvA subunits (via domain III) on 2 adjacent RuvB subunits; this complex drives branch migration. In the full resolvosome a probable DNA-RuvA(4)-RuvB(12)-RuvC(2) complex forms which resolves the HJ.

It localises to the cytoplasm. The catalysed reaction is ATP + H2O = ADP + phosphate + H(+). Functionally, the RuvA-RuvB-RuvC complex processes Holliday junction (HJ) DNA during genetic recombination and DNA repair, while the RuvA-RuvB complex plays an important role in the rescue of blocked DNA replication forks via replication fork reversal (RFR). RuvA specifically binds to HJ cruciform DNA, conferring on it an open structure. The RuvB hexamer acts as an ATP-dependent pump, pulling dsDNA into and through the RuvAB complex. RuvB forms 2 homohexamers on either side of HJ DNA bound by 1 or 2 RuvA tetramers; 4 subunits per hexamer contact DNA at a time. Coordinated motions by a converter formed by DNA-disengaged RuvB subunits stimulates ATP hydrolysis and nucleotide exchange. Immobilization of the converter enables RuvB to convert the ATP-contained energy into a lever motion, pulling 2 nucleotides of DNA out of the RuvA tetramer per ATP hydrolyzed, thus driving DNA branch migration. The RuvB motors rotate together with the DNA substrate, which together with the progressing nucleotide cycle form the mechanistic basis for DNA recombination by continuous HJ branch migration. Branch migration allows RuvC to scan DNA until it finds its consensus sequence, where it cleaves and resolves cruciform DNA. This Desulforamulus reducens (strain ATCC BAA-1160 / DSM 100696 / MI-1) (Desulfotomaculum reducens) protein is Holliday junction branch migration complex subunit RuvB.